The following is a 161-amino-acid chain: Cell cycle link protein (161 aa).

The segment at 9 to 21 (MPDDVKREIKEIY) is binding to host SKP1 protein. Positions 111–115 (LYCDE) match the LXCXE motif, interaction with host RBR motif.

As to quaternary structure, interacts with host SKP1. Interacts (via LXCXE domain) with host retinoblastoma-related protein 2 (RBR2). Interacts (via LXCXE domain) with human RB1. Interacts (via LXCXE domain) with retinoblastoma-related proteins (RBR).

Interacts with and disrupts the function of host retinoblastoma-related proteins RBR, which are key regulators of the cell cycle. Induces transcriptional activation of E2F-regulated S-phase and G2/M-phase-specific genes. Inactivation of the ability of RBR to arrest the cell cycle leads to the stimulation of viral DNA replication. Acts as a suppressor of RNA-mediated gene silencing, also known as post-transcriptional gene silencing (PTGS), a mechanism of plant viral defense that limits the accumulation of viral RNAs. This Musa (BBTV) protein is Cell cycle link protein (DNA-C).